The chain runs to 884 residues: Translation initiation factor IF-2 (884 aa).

Positions 93-288 are disordered; that stretch reads VNTPEAEQAK…KGKRKPSTLQ (196 aa). Basic and acidic residues predominate over residues 99–209; the sequence is EQAKAEEQAQ…KMAAENEGKW (111 aa). Residues 216-229 show a composition bias toward polar residues; that stretch reads QTESADYHVTTSQH. Basic and acidic residues predominate over residues 231–246; that stretch reads RAAEDENDAKVEGDRR. A compositionally biased stretch (basic residues) spans 247 to 261; the sequence is SRTRGGKATKQKKGN. Over residues 262–275 the composition is skewed to basic and acidic residues; the sequence is KLSESKADREEARA. The 170-residue stretch at 383 to 552 folds into the tr-type G domain; it reads HRAPVVTIMG…LLQAEVLELK (170 aa). Positions 392 to 399 are G1; the sequence is GHVDHGKT. 392 to 399 lines the GTP pocket; that stretch reads GHVDHGKT. The segment at 417-421 is G2; that stretch reads GITQH. Positions 438-441 are G3; sequence DTPG. GTP is bound by residues 438–442 and 492–495; these read DTPGH and NKID. The tract at residues 492–495 is G4; it reads NKID. Positions 528–530 are G5; sequence SAK.

The protein belongs to the TRAFAC class translation factor GTPase superfamily. Classic translation factor GTPase family. IF-2 subfamily.

The protein localises to the cytoplasm. In terms of biological role, one of the essential components for the initiation of protein synthesis. Protects formylmethionyl-tRNA from spontaneous hydrolysis and promotes its binding to the 30S ribosomal subunits. Also involved in the hydrolysis of GTP during the formation of the 70S ribosomal complex. The chain is Translation initiation factor IF-2 from Yersinia pestis bv. Antiqua (strain Angola).